The chain runs to 338 residues: Phosphatidate cytidylyltransferase, mitochondrial (338 aa).

It belongs to the TAM41 family. The cofactor is Mg(2+).

The protein resides in the mitochondrion inner membrane. It carries out the reaction a 1,2-diacyl-sn-glycero-3-phosphate + CTP + H(+) = a CDP-1,2-diacyl-sn-glycerol + diphosphate. The protein operates within phospholipid metabolism; CDP-diacylglycerol biosynthesis; CDP-diacylglycerol from sn-glycerol 3-phosphate: step 3/3. Its function is as follows. Catalyzes the conversion of phosphatidic acid (PA) to CDP-diacylglycerol (CDP-DAG), an essential intermediate in the synthesis of phosphatidylglycerol, cardiolipin and phosphatidylinositol. This is Phosphatidate cytidylyltransferase, mitochondrial (tamm41) from Xenopus laevis (African clawed frog).